Here is a 129-residue protein sequence, read N- to C-terminus: Large ribosomal subunit protein bL12 (129 aa).

The protein belongs to the bacterial ribosomal protein bL12 family. As to quaternary structure, homodimer. Part of the ribosomal stalk of the 50S ribosomal subunit. Forms a multimeric L10(L12)X complex, where L10 forms an elongated spine to which 2 to 4 L12 dimers bind in a sequential fashion. Binds GTP-bound translation factors.

Its function is as follows. Forms part of the ribosomal stalk which helps the ribosome interact with GTP-bound translation factors. Is thus essential for accurate translation. This Treponema denticola (strain ATCC 35405 / DSM 14222 / CIP 103919 / JCM 8153 / KCTC 15104) protein is Large ribosomal subunit protein bL12.